The chain runs to 273 residues: Tryptophan synthase alpha chain (273 aa).

Active-site proton acceptor residues include E56 and D67.

This sequence belongs to the TrpA family. Tetramer of two alpha and two beta chains.

The catalysed reaction is (1S,2R)-1-C-(indol-3-yl)glycerol 3-phosphate + L-serine = D-glyceraldehyde 3-phosphate + L-tryptophan + H2O. Its pathway is amino-acid biosynthesis; L-tryptophan biosynthesis; L-tryptophan from chorismate: step 5/5. Its function is as follows. The alpha subunit is responsible for the aldol cleavage of indoleglycerol phosphate to indole and glyceraldehyde 3-phosphate. The chain is Tryptophan synthase alpha chain from Shewanella baltica (strain OS155 / ATCC BAA-1091).